We begin with the raw amino-acid sequence, 195 residues long: Imidazoleglycerol-phosphate dehydratase (195 aa).

The protein belongs to the imidazoleglycerol-phosphate dehydratase family.

Its subcellular location is the cytoplasm. It carries out the reaction D-erythro-1-(imidazol-4-yl)glycerol 3-phosphate = 3-(imidazol-4-yl)-2-oxopropyl phosphate + H2O. The protein operates within amino-acid biosynthesis; L-histidine biosynthesis; L-histidine from 5-phospho-alpha-D-ribose 1-diphosphate: step 6/9. In Sphingopyxis alaskensis (strain DSM 13593 / LMG 18877 / RB2256) (Sphingomonas alaskensis), this protein is Imidazoleglycerol-phosphate dehydratase.